An 82-amino-acid chain; its full sequence is Large ribosomal subunit protein bL28 (82 aa).

Positions 1–25 (MAKVDQITKKRAMTGNTRSHALNHS) are disordered.

This sequence belongs to the bacterial ribosomal protein bL28 family.

The sequence is that of Large ribosomal subunit protein bL28 from Malacoplasma penetrans (strain HF-2) (Mycoplasma penetrans).